The following is a 457-amino-acid chain: MEELVSVILAAGLGKRMKSKYPKVVHKVCGKPMVKWVVEAAQEAGSKEVIVVVGHGREMVEEVLGDEVKYAYQKVQLGTGHAVMMAEEFLPLEGMVLILTGDTPLITSDTLRKLVEYHISEGNDVTILSSIFDDPTGYGRIIRDESGNVVKIVEEKDASEEEKRVKEINSGMYVVDIAKLRAALKEITNDNAQGEYYLTDAVEIIRNMGGKIGAVVGESEEIIGVNSRVQLSNAEKVMRRRINEKHMENGVTIIDPDSTYIDAEVEIGRDTVILPGTILQGKTKIGEDCEIGPNSRIVDSTIGNGCNVMYSVVLSSSVGNNVKIGPFAHIRPESVIKNNVKIGDFVEIKKSVIDEGSKVPHLTYVGDAELGKNVNMGCGSITVNYDGKQKHKTIIGDNVFVGCNVNLVAPVKIGNNAYIAAGSTITEDVPEGALAIARSRQTNKEGWVEERIKKGRL.

Positions 1–228 (MEELVSVILA…SEEIIGVNSR (228 aa)) are pyrophosphorylase. Residues 9–12 (LAAG), K23, Q73, and 78–79 (GT) contribute to the UDP-N-acetyl-alpha-D-glucosamine site. A Mg(2+)-binding site is contributed by D102. Residues G139, E154, N169, and N226 each contribute to the UDP-N-acetyl-alpha-D-glucosamine site. N226 is a binding site for Mg(2+). The tract at residues 229–249 (VQLSNAEKVMRRRINEKHMEN) is linker. The N-acetyltransferase stretch occupies residues 250–457 (GVTIIDPDST…VEERIKKGRL (208 aa)). UDP-N-acetyl-alpha-D-glucosamine is bound by residues R331 and K349. H361 serves as the catalytic Proton acceptor. Positions 364 and 375 each coordinate UDP-N-acetyl-alpha-D-glucosamine. Residues 384-385 (NY), A421, and R438 each bind acetyl-CoA.

This sequence in the N-terminal section; belongs to the N-acetylglucosamine-1-phosphate uridyltransferase family. In the C-terminal section; belongs to the transferase hexapeptide repeat family. Homotrimer. Requires Mg(2+) as cofactor.

It localises to the cytoplasm. The catalysed reaction is alpha-D-glucosamine 1-phosphate + acetyl-CoA = N-acetyl-alpha-D-glucosamine 1-phosphate + CoA + H(+). The enzyme catalyses N-acetyl-alpha-D-glucosamine 1-phosphate + UTP + H(+) = UDP-N-acetyl-alpha-D-glucosamine + diphosphate. It functions in the pathway nucleotide-sugar biosynthesis; UDP-N-acetyl-alpha-D-glucosamine biosynthesis; N-acetyl-alpha-D-glucosamine 1-phosphate from alpha-D-glucosamine 6-phosphate (route II): step 2/2. The protein operates within nucleotide-sugar biosynthesis; UDP-N-acetyl-alpha-D-glucosamine biosynthesis; UDP-N-acetyl-alpha-D-glucosamine from N-acetyl-alpha-D-glucosamine 1-phosphate: step 1/1. It participates in bacterial outer membrane biogenesis; LPS lipid A biosynthesis. Functionally, catalyzes the last two sequential reactions in the de novo biosynthetic pathway for UDP-N-acetylglucosamine (UDP-GlcNAc). The C-terminal domain catalyzes the transfer of acetyl group from acetyl coenzyme A to glucosamine-1-phosphate (GlcN-1-P) to produce N-acetylglucosamine-1-phosphate (GlcNAc-1-P), which is converted into UDP-GlcNAc by the transfer of uridine 5-monophosphate (from uridine 5-triphosphate), a reaction catalyzed by the N-terminal domain. This is Bifunctional protein GlmU from Caldanaerobacter subterraneus subsp. tengcongensis (strain DSM 15242 / JCM 11007 / NBRC 100824 / MB4) (Thermoanaerobacter tengcongensis).